Reading from the N-terminus, the 478-residue chain is MRCGWMAGSSETVGIMDTADWYIGHGQVTVAPCVSIERSQIKSPDSGYGVFVDVDKLQEEECEAVELLRVPYGNVISVRTLMDWLSGRGDGYDASKDLIKTYLALFLEDTSNHRFVTETNMLILYLALMAILSERGYGFPDKFVIYLRDVLLQTRLLTPVLEVLTQEAGDAGAHYRNGPQEIFLSTLLQFISGAFMGCTRAVVLRVYAAVLSRCLEIPHETSPGSEDYTVSSSLVPILDFTNHSCEHRNAYFDVDRESGDVLLMLDVAACAGLGDRFEVFISYCPVEELVHFKHTYGFFPRASCGTQFWHMFLSDTWLKEERAPHGSGSLFQIYSELRVLPYIELALISGQVYVNDYCSSFPELLLPFVNIEALSDKESKLTALKGDQQLLAEAKTNFLSFLARYLDKLVANGPIRHSGPVCASLRDILLRELELSKRLRNTLQHGSAFLSSHMADTSPPYCPSPAPSPPYAYMYTSS.

The 253-residue stretch at 32–284 folds into the SET domain; sequence PCVSIERSQI…DRFEVFISYC (253 aa). Positions 199–299 are SET-like; sequence TRAVVLRVYA…VHFKHTYGFF (101 aa).

This sequence belongs to the class V-like SAM-binding methyltransferase superfamily.

It is found in the cytoplasm. The protein localises to the cytosol. It carries out the reaction L-lysyl-[cytochrome c] + S-adenosyl-L-methionine = N(6)-methyl-L-lysyl-[cytochrome c] + S-adenosyl-L-homocysteine + H(+). In terms of biological role, methyltransferase which mediates trimethylation of cytochrome c (CYC1). The polypeptide is Cytochrome c lysine N-methyltransferase 1 (CTM1) (Eremothecium gossypii (strain ATCC 10895 / CBS 109.51 / FGSC 9923 / NRRL Y-1056) (Yeast)).